Reading from the N-terminus, the 434-residue chain is Histidine--tRNA ligase (434 aa).

It belongs to the class-II aminoacyl-tRNA synthetase family. As to quaternary structure, homodimer.

The protein localises to the cytoplasm. It carries out the reaction tRNA(His) + L-histidine + ATP = L-histidyl-tRNA(His) + AMP + diphosphate + H(+). This Latilactobacillus sakei subsp. sakei (strain 23K) (Lactobacillus sakei subsp. sakei) protein is Histidine--tRNA ligase.